The following is a 22-amino-acid chain: Hemocyanin subunit 4 (22 aa).

Belongs to the tyrosinase family. Hemocyanin subfamily. Hemolymph.

The protein resides in the secreted. Its subcellular location is the extracellular space. Hemocyanins are copper-containing oxygen carriers occurring freely dissolved in the hemolymph of many mollusks and arthropods. This is Hemocyanin subunit 4 from Homarus americanus (American lobster).